The sequence spans 490 residues: Probable cytochrome P450 518B1 (490 aa).

Residues 2–22 form a helical membrane-spanning segment; sequence LTNIIILIILYLFYDFCYKNF. Cys437 lines the heme pocket.

Belongs to the cytochrome P450 family. It depends on heme as a cofactor.

It localises to the membrane. The protein is Probable cytochrome P450 518B1 (cyp518B1) of Dictyostelium discoideum (Social amoeba).